The chain runs to 537 residues: DNA-directed primase/polymerase protein (537 aa).

Residues 1–22 are a coiled coil; that stretch reads MLRKWEARVKQIEERASHYERK. Residues R76, 114–116, 165–169, 270–273, and K279 each bind substrate; these read DLE, KFSRH, and RNFR. Positions 114 and 116 each coordinate Mn(2+). C401, H408, C428, and C433 together coordinate Zn(2+). Positions 401–434 match the Zinc knuckle motif motif; the sequence is CENIGRAHKSNNIMILVDLKNEVWYQKCHDPVCK. Positions 462–481 are disordered; sequence SGETDDTSTSLTKDSQTPPS. Residues 462–536 form an interaction with RPA1 region; it reads SGETDDTSTS…DELIIEALQN (75 aa). A compositionally biased stretch (low complexity) spans 468-478; the sequence is TSTSLTKDSQT. 2 consecutive short sequence motifs (RPA1-binding motif) follow at residues 494-507 and 524-532; these read WDDE…EATE and DIPDELIIE.

This sequence belongs to the eukaryotic-type primase small subunit family. In terms of assembly, interacts with RPA1; leading to recruitment to chromatin and stimulate DNA primase activity. Interacts with SSBP1. Interacts with POLDIP2; leading to enhance DNA polymerase activity. It depends on Mn(2+) as a cofactor.

Its subcellular location is the nucleus. The protein resides in the mitochondrion matrix. It localises to the chromosome. The catalysed reaction is ssDNA + n NTP = ssDNA/pppN(pN)n-1 hybrid + (n-1) diphosphate.. It carries out the reaction DNA(n) + a 2'-deoxyribonucleoside 5'-triphosphate = DNA(n+1) + diphosphate. Functionally, DNA primase and DNA polymerase required to tolerate replication-stalling lesions by bypassing them. Required to facilitate mitochondrial and nuclear replication fork progression by initiating de novo DNA synthesis using dNTPs and acting as an error-prone DNA polymerase able to bypass certain DNA lesions. Shows a high capacity to tolerate DNA damage lesions such as 8oxoG and abasic sites in DNA. Provides different translesion synthesis alternatives when DNA replication is stalled: able to synthesize DNA primers downstream of lesions, such as ultraviolet (UV) lesions, R-loops and G-quadruplexes, to allow DNA replication to continue. Can also realign primers ahead of 'unreadable lesions' such as abasic sites and 6-4 photoproduct (6-4 pyrimidine-pyrimidinone), thereby skipping the lesion. Repriming avoids fork degradation while leading to accumulation of internal ssDNA gaps behind the forks. Also able to incorporate nucleotides opposite DNA lesions such as 8oxoG, like a regular translesion synthesis DNA polymerase. Also required for reinitiating stalled forks after UV damage during nuclear DNA replication. Required for mitochondrial DNA (mtDNA) synthesis and replication, by reinitiating synthesis after UV damage or in the presence of chain-terminating nucleotides. Prevents APOBEC family-mediated DNA mutagenesis by repriming downstream of abasic site to prohibit error-prone translesion synthesis. Has non-overlapping function with POLH. In addition to its role in DNA damage response, also required to maintain efficient nuclear and mitochondrial DNA replication in unperturbed cells. The chain is DNA-directed primase/polymerase protein from Mus musculus (Mouse).